The sequence spans 120 residues: Aspartate 1-decarboxylase (120 aa).

Ser25 acts as the Schiff-base intermediate with substrate; via pyruvic acid in catalysis. Residue Ser25 is modified to Pyruvic acid (Ser). Residue Thr57 participates in substrate binding. Tyr58 serves as the catalytic Proton donor. Gly73–Ala75 lines the substrate pocket.

It belongs to the PanD family. As to quaternary structure, heterooctamer of four alpha and four beta subunits. Pyruvate serves as cofactor. Post-translationally, is synthesized initially as an inactive proenzyme, which is activated by self-cleavage at a specific serine bond to produce a beta-subunit with a hydroxyl group at its C-terminus and an alpha-subunit with a pyruvoyl group at its N-terminus.

It localises to the cytoplasm. It carries out the reaction L-aspartate + H(+) = beta-alanine + CO2. It functions in the pathway cofactor biosynthesis; (R)-pantothenate biosynthesis; beta-alanine from L-aspartate: step 1/1. Functionally, catalyzes the pyruvoyl-dependent decarboxylation of aspartate to produce beta-alanine. This is Aspartate 1-decarboxylase from Coprothermobacter proteolyticus (strain ATCC 35245 / DSM 5265 / OCM 4 / BT).